Reading from the N-terminus, the 395-residue chain is Pyruvate synthase subunit PorA (395 aa).

As to quaternary structure, heterotetramer of one alpha, one beta, one delta and one gamma chain.

It carries out the reaction 2 oxidized [2Fe-2S]-[ferredoxin] + pyruvate + CoA = 2 reduced [2Fe-2S]-[ferredoxin] + acetyl-CoA + CO2 + H(+). This is Pyruvate synthase subunit PorA (porA) from Pyrococcus abyssi (strain GE5 / Orsay).